The primary structure comprises 171 residues: 3-hydroxydecanoyl-[acyl-carrier-protein] dehydratase (171 aa).

The active site involves H70.

It belongs to the thioester dehydratase family. FabA subfamily. In terms of assembly, homodimer.

The protein localises to the cytoplasm. The enzyme catalyses a (3R)-hydroxyacyl-[ACP] = a (2E)-enoyl-[ACP] + H2O. The catalysed reaction is (3R)-hydroxydecanoyl-[ACP] = (2E)-decenoyl-[ACP] + H2O. It catalyses the reaction (2E)-decenoyl-[ACP] = (3Z)-decenoyl-[ACP]. It functions in the pathway lipid metabolism; fatty acid biosynthesis. In terms of biological role, necessary for the introduction of cis unsaturation into fatty acids. Catalyzes the dehydration of (3R)-3-hydroxydecanoyl-ACP to E-(2)-decenoyl-ACP and then its isomerization to Z-(3)-decenoyl-ACP. Can catalyze the dehydratase reaction for beta-hydroxyacyl-ACPs with saturated chain lengths up to 16:0, being most active on intermediate chain length. In Shewanella woodyi (strain ATCC 51908 / MS32), this protein is 3-hydroxydecanoyl-[acyl-carrier-protein] dehydratase.